A 212-amino-acid chain; its full sequence is Orotate phosphoribosyltransferase (212 aa).

5-phospho-alpha-D-ribose 1-diphosphate contacts are provided by residues R97, K101, H103, and 123–131 (DDLISTGGS). An orotate-binding site is contributed by S127.

The protein belongs to the purine/pyrimidine phosphoribosyltransferase family. PyrE subfamily. In terms of assembly, homodimer. It depends on Mg(2+) as a cofactor.

It catalyses the reaction orotidine 5'-phosphate + diphosphate = orotate + 5-phospho-alpha-D-ribose 1-diphosphate. The protein operates within pyrimidine metabolism; UMP biosynthesis via de novo pathway; UMP from orotate: step 1/2. In terms of biological role, catalyzes the transfer of a ribosyl phosphate group from 5-phosphoribose 1-diphosphate to orotate, leading to the formation of orotidine monophosphate (OMP). The chain is Orotate phosphoribosyltransferase from Lactiplantibacillus plantarum (strain ATCC BAA-793 / NCIMB 8826 / WCFS1) (Lactobacillus plantarum).